The sequence spans 210 residues: Probable nicotinate-nucleotide adenylyltransferase (210 aa).

It belongs to the NadD family.

It carries out the reaction nicotinate beta-D-ribonucleotide + ATP + H(+) = deamido-NAD(+) + diphosphate. The protein operates within cofactor biosynthesis; NAD(+) biosynthesis; deamido-NAD(+) from nicotinate D-ribonucleotide: step 1/1. Catalyzes the reversible adenylation of nicotinate mononucleotide (NaMN) to nicotinic acid adenine dinucleotide (NaAD). The polypeptide is Probable nicotinate-nucleotide adenylyltransferase (Vesicomyosocius okutanii subsp. Calyptogena okutanii (strain HA)).